Consider the following 40-residue polypeptide: Beta-glucosidase 1 (40 aa).

It catalyses the reaction Hydrolysis of terminal, non-reducing beta-D-glucosyl residues with release of beta-D-glucose.. This chain is Beta-glucosidase 1, found in Passalora fulva (Tomato leaf mold).